Here is a 146-residue protein sequence, read N- to C-terminus: Protein cornichon homolog 1 (146 aa).

3 consecutive transmembrane segments (helical) span residues Ile-9–Leu-29, Cys-61–Val-81, and Leu-114–Tyr-134.

The protein belongs to the cornichon family.

It is found in the membrane. This chain is Protein cornichon homolog 1, found in Arabidopsis thaliana (Mouse-ear cress).